The primary structure comprises 365 residues: tRNA/tmRNA (uracil-C(5))-methyltransferase (365 aa).

S-adenosyl-L-methionine-binding residues include Gln-189, Tyr-217, Asn-222, Glu-238, and Asp-298. The Nucleophile role is filled by Cys-323. Residue Glu-357 is the Proton acceptor of the active site.

Belongs to the class I-like SAM-binding methyltransferase superfamily. RNA M5U methyltransferase family. TrmA subfamily.

It catalyses the reaction uridine(54) in tRNA + S-adenosyl-L-methionine = 5-methyluridine(54) in tRNA + S-adenosyl-L-homocysteine + H(+). It carries out the reaction uridine(341) in tmRNA + S-adenosyl-L-methionine = 5-methyluridine(341) in tmRNA + S-adenosyl-L-homocysteine + H(+). Dual-specificity methyltransferase that catalyzes the formation of 5-methyluridine at position 54 (m5U54) in all tRNAs, and that of position 341 (m5U341) in tmRNA (transfer-mRNA). The chain is tRNA/tmRNA (uracil-C(5))-methyltransferase from Shewanella sediminis (strain HAW-EB3).